Consider the following 145-residue polypeptide: Large ribosomal subunit protein uL15 (145 aa).

A disordered region spans residues G20 to H39.

Belongs to the universal ribosomal protein uL15 family.

The sequence is that of Large ribosomal subunit protein uL15 (RPL27A) from Trypanosoma brucei brucei.